The chain runs to 265 residues: Homeobox protein CDX-1 (265 aa).

A disordered region spans residues 9–153 (KDSPVYPGPA…GGGGSGKTRT (145 aa)). The span at 30 to 42 (YGPPAPPPAPPQY) shows a compositional bias: pro residues. Over residues 73–92 (AAAYGPGPAAPAASPASLAF) the composition is skewed to low complexity. The span at 93–108 (GPPPDFSPVPAPPGPG) shows a compositional bias: pro residues. Over residues 110 to 126 (GLLAQPLGGPGTPSSPG) the composition is skewed to low complexity. Residues 154 to 213 (KDKYRVVYTDHQRLELEKEFHYSRYITIRRKSELAANLGLTERQVKIWFQNRRAKERKVN) constitute a DNA-binding region (homeobox). Residues 157–178 (YRVVYTDHQRLELEKEFHYSRY) are interaction with DNA. The interval 196 to 207 (RQVKIWFQNRRA) is interaction with 5-mCpG DNA. Residues 207-217 (AKERKVNKKKQ) show a composition bias toward basic residues. The disordered stretch occupies residues 207–265 (AKERKVNKKKQQQQQPPQPPMAHDITATPAGPSLGGLCPSNTSLLATSSPMPVKEEFLP). A compositionally biased stretch (polar residues) spans 245 to 256 (PSNTSLLATSSP).

Belongs to the Caudal homeobox family. In terms of tissue distribution, intestinal epithelium.

It is found in the nucleus. Functionally, plays a role in transcriptional regulation. Involved in activated KRAS-mediated transcriptional activation of PRKD1 in colorectal cancer (CRC) cells. Binds to the PRKD1 promoter in colorectal cancer (CRC) cells. Could play a role in the terminal differentiation of the intestine. Binds preferentially to methylated DNA. In Homo sapiens (Human), this protein is Homeobox protein CDX-1 (CDX1).